The chain runs to 244 residues: Type III pantothenate kinase (244 aa).

7 to 14 is an ATP binding site; that stretch reads DIGNTRLK. Residues Y95 and 102-105 each bind substrate; that span reads GIDR. D104 acts as the Proton acceptor in catalysis. T126 contributes to the ATP binding site. Residue T177 participates in substrate binding.

It belongs to the type III pantothenate kinase family. Homodimer. Requires NH4(+) as cofactor. K(+) is required as a cofactor.

It localises to the cytoplasm. It catalyses the reaction (R)-pantothenate + ATP = (R)-4'-phosphopantothenate + ADP + H(+). Its pathway is cofactor biosynthesis; coenzyme A biosynthesis; CoA from (R)-pantothenate: step 1/5. Catalyzes the phosphorylation of pantothenate (Pan), the first step in CoA biosynthesis. The sequence is that of Type III pantothenate kinase from Acinetobacter baumannii (strain AB307-0294).